The chain runs to 225 residues: MGFGDLKSAAGLRVLNDFLADKSYIEGYVPSQADIAVFEAVGAPPPADLFHALRWYNHIKSYEKEKASLPGVKKALGKYGPADVEDTTGSGATDSKDDDDIDLFGSDDEEESEEAKRLREERLAQYESKKAKKPALVAKSSILLDVKPWDDETDMAKLEECVRSIQADGLVWGSSKLVPVGYGIKKLQIQCVVEDDKVGTDMLEEQITAFEDYVQSMDVAAFNKI.

The GST C-terminal domain maps to 2–84 (GFGDLKSAAG…ALGKYGPADV (83 aa)). Positions 80–114 (GPADVEDTTGSGATDSKDDDDIDLFGSDDEEESEE) are disordered. Residues 96-113 (KDDDDIDLFGSDDEEESE) show a composition bias toward acidic residues. Residue Ser106 is modified to Phosphoserine; by CK2.

It belongs to the EF-1-beta/EF-1-delta family. In terms of assembly, EF-1 is composed of 4 subunits: alpha, beta (alpha subunit of the eEF1B subcomplex), delta (beta subunit of the eEF1B subcomplex), and gamma (gamma subunit of the eEF1B subcomplex). Interacts with elongation factor EEF1A1. Phosphorylation affects the GDP/GTP exchange rate.

Catalytic subunit of the guanine nucleotide exchange factor (GEF) (eEF1B subcomplex) of the eukaryotic elongation factor 1 complex (eEF1). Stimulates the exchange of GDP for GTP on elongation factor 1A (eEF1A), probably by displacing GDP from the nucleotide binding pocket in eEF1A. The chain is Elongation factor 1-beta (EEF1B) from Gallus gallus (Chicken).